Here is a 108-residue protein sequence, read N- to C-terminus: Anti-sigma-B factor antagonist (108 aa).

One can recognise an STAS domain in the interval 3 to 108 (LNIETTTQDK…MHVNEGTEVE (106 aa)). At serine 57 the chain carries Phosphoserine.

It belongs to the anti-sigma-factor antagonist family. Phosphorylated by RsbW on a serine residue.

Positive regulator of sigma-B activity. Non-phosphorylated RsbV binds to RsbW, preventing its association with sigma-B. When phosphorylated, releases RsbW, which is then free to complex with and inactivate sigma-B. This Staphylococcus aureus (strain NCTC 8325 / PS 47) protein is Anti-sigma-B factor antagonist (rsbV).